A 150-amino-acid chain; its full sequence is Large ribosomal subunit protein uL15 (150 aa).

The segment at 1 to 57 is disordered; it reads MTIKLESLQSNKGSRRKKMRKGRGIAAGQGASCGFGMRGQKSRSGRPTRPGFEGGQM. Over residues 13–23 the composition is skewed to basic residues; it reads GSRRKKMRKGR. Gly residues predominate over residues 25-37; it reads IAAGQGASCGFGM.

The protein belongs to the universal ribosomal protein uL15 family. As to quaternary structure, part of the 50S ribosomal subunit.

Binds to the 23S rRNA. The sequence is that of Large ribosomal subunit protein uL15 from Prochlorococcus marinus (strain NATL1A).